We begin with the raw amino-acid sequence, 345 residues long: Dihydroorotase (345 aa).

Residues His-13 and His-15 each coordinate Zn(2+). Substrate is bound by residues 15–17 (HLR) and Asn-41. Residues Lys-99, His-136, and His-174 each contribute to the Zn(2+) site. Lys-99 is subject to N6-carboxylysine. His-136 provides a ligand contact to substrate. Leu-219 lines the substrate pocket. Residue Asp-247 participates in Zn(2+) binding. The active site involves Asp-247. Positions 251 and 263 each coordinate substrate.

Belongs to the metallo-dependent hydrolases superfamily. DHOase family. Class II DHOase subfamily. As to quaternary structure, homodimer. The cofactor is Zn(2+).

It catalyses the reaction (S)-dihydroorotate + H2O = N-carbamoyl-L-aspartate + H(+). It participates in pyrimidine metabolism; UMP biosynthesis via de novo pathway; (S)-dihydroorotate from bicarbonate: step 3/3. Catalyzes the reversible cyclization of carbamoyl aspartate to dihydroorotate. The sequence is that of Dihydroorotase from Agrobacterium fabrum (strain C58 / ATCC 33970) (Agrobacterium tumefaciens (strain C58)).